The following is a 1875-amino-acid chain: MTQVEGLSTWNPAFRPEDNESIITNNLAQLVLDPESRPAEVSPVDVHTSPFGDDADVENETHVLESPLPSEPQDAPAPVATDSDPSQNADPITELKDVLEQPRHIDGNDSSIHPDDTQVAENVAEYVSTQPEDDKEQANGLHLGNTVAEGMSAEHDKDEHTSGLHLGNSVAEASHFSAPEEFSGVETSGNGLHFRAVKGDTSWIDGDEVEEDKDAMPHGEISNDRPGFWGNLGNDGRDNEDDFFDQLKTQTKPIYVPPETESRFEEGVPLLDNSPQTPVEQAQRGDNQLDNVFAGDEDDEGDFFNEIQKSTPEEGPFHITRKSTTQVLSTLDTTPDSPFSETSPTAQDFNQILADTSAQNETKEPSDADLAARWQAELSDDAEETMPPEDDLAARWQAELDDDDDDLLLDEASTANNDQEAAQLNQDHNAGFAASLQSPFGTPENPARPKAQPISYTPHQPSTSDLLQGIPAQAPVPQPHNAPTSNYFTAQAPPNPVTTRAESFAERSKEGYKSPYDLPEDLARPRRPVVSKQVIPQPGNLPPPPPRSSSIPAPSPQPSKAPAGVLGTSPKQPVAAVTPKNFYEELPLPPPRPKSRPASSGRYTPNPTSAPPPAPLSVPQSIPAPANPYASIPLAPKSAGDLQSPPELHQPEKLDPYSSLLAPAALGAPVVPGAQSRYSPKPPGLQAGTKPLPSPRYSPAPPASTVVAGAPPPRNRYASQPSSISGPGAVLPFQPRTSSPLAHHEKISYHPPGVSEERRRSEPAAGLPPPSHAQPFQPPVIPESQGPVDAGIHENVQPSVTQPNSPPRNPYAPSAYVNEFAKRVAPVQNDLPSIGTQNVAYAPPVGESPFVPPRRSQTQSPSQQLLSPRLSLPPIDPLQRPASVHGATSPTKTVNPYAPAQVSLHNRALSQSLDFIPPTDGQQLDPLERWKGAPIVKFGFGGIVTSCFPKHIPRYSAGQAAPMIKSCPGEIKICPLNDRLPPAESIVQYPGPLKNKSKKKDLLAWLSSKIAAFENEGDPSFDPTQPDITKRHEEKILLWKIVRFLVEHDGALEGSAEAQKSLRSVMFPHLQQSTTDQVPGDSFIPAATPQAIDASARSDAADSHSIESLRDSLVLGEREKAVWAAVDNRLWGHAMIIASTMDRSVWKQVVQEFVRREVRSTTSRTESLAAFYEILAGNVEESIDELVPPSARAGLQMISKVDGQGPAKNTLDGLESWRETLGLVLSNRSPDDQRALLALGQLLLSYGRTEAAHICFIVSRAAVFGGIDDPQANIVLLGVDHHRLASSAPLHNDDSILLTEAYEYATSVLAGSPMNTLPYLLAFKLIHAWSLADQGRKSEAQQYCDAIAAALKAATKPSGYHNPHLFYGVDELSARLRQTASDAGSSWITRPSMEKVSGSMWAKFNSFVAGEESDAASTGSGKAEEIGPFAKVSGTPTVSRSPSVSDIYGSYPMGGAQSAPNTGASRYHPVNQYALSSSPEQLRGRSSLDSQRSSSYGFPPPQRRGSQEPSTPVEMNIYQGMPTYGSPSAAGYQSTPPQTSYMPLAPVEEDSAAYSPPDPQPAPSQTLDNVSPYQPAHYAPESFGQPFETNDASATSQFEQGGYMPPSSGGGYEPPFVEVNPASASDDVEDESNEGAKPKKKSFMDEDDDDDMAARAAAIQKAERARRDREADEAFRKAAEADAQKPPPTTAKKGWFTGWFGGKKEENNSGGGPIRAKLGEENSFYYDKELKKWVNKKDPGSSTPARGTPPPPRGSAPPSRTASGTGGPPPPAVGTPPLAALGAGSRPSSSAGVPPRLTSSPAPSALGAPPPIPRSVSTSATLPTPPDGSAGAPPRPATSLSYASSIDDLLGAPQARKGPAARGKKKGRYVDVMAK.

Disordered stretches follow at residues 34-140 (PESR…QANG), 211-241 (EDKDAMPHGEISNDRPGFWGNLGNDGRDNED), 258-814 (PETE…YAPS), 835-868 (GTQNVAYAPPVGESPFVPPRRSQTQSPSQQLLSP), 1413-1443 (SDAASTGSGKAEEIGPFAKVSGTPTVSRSPS), 1475-1717 (LSSS…IRAK), and 1733-1875 (WVNK…VMAK). 2 stretches are compositionally biased toward basic and acidic residues: residues 93–116 (TELKDVLEQPRHIDGNDSSIHPDD) and 214–223 (DAMPHGEISN). Polar residues-rich tracts occupy residues 273-290 (NSPQTPVEQAQRGDNQLD) and 322-360 (KSTTQVLSTLDTTPDSPFSETSPTAQDFNQILADTSAQN). Acidic residues-rich tracts occupy residues 378–391 (LSDDAEETMPPEDD) and 399–409 (ELDDDDDDLLL). Composition is skewed to polar residues over residues 413–428 (STANNDQEAAQLNQDH) and 454–466 (ISYTPHQPSTSDL). Positions 503–512 (SFAERSKEGY) are enriched in basic and acidic residues. Residues 539 to 559 (GNLPPPPPRSSSIPAPSPQPS) show a composition bias toward pro residues. Low complexity-rich tracts occupy residues 596–607 (RPASSGRYTPNP) and 660–674 (LLAPAALGAPVVPGA). 2 stretches are compositionally biased toward pro residues: residues 692 to 702 (LPSPRYSPAPP) and 766 to 781 (GLPPPSHAQPFQPPVI). Residues 853–868 (PRRSQTQSPSQQLLSP) show a composition bias toward low complexity. Residues 1434–1443 (GTPTVSRSPS) show a composition bias toward polar residues. A compositionally biased stretch (low complexity) spans 1484–1495 (GRSSLDSQRSSS). Polar residues-rich tracts occupy residues 1531-1541 (GYQSTPPQTSY), 1563-1572 (PSQTLDNVSP), and 1587-1599 (FETNDASATSQFE). Over residues 1661–1683 (KAERARRDREADEAFRKAAEADA) the composition is skewed to basic and acidic residues. Over residues 1775–1785 (TPPLAALGAGS) the composition is skewed to low complexity.

The protein belongs to the SEC16 family.

The protein localises to the endoplasmic reticulum membrane. Its function is as follows. Involved in the initiation of assembly of the COPII coat required for the formation of transport vesicles from the endoplasmic reticulum (ER) and the selection of cargo molecules. Also involved in autophagy. The chain is COPII coat assembly protein sec16 (sec16) from Aspergillus clavatus (strain ATCC 1007 / CBS 513.65 / DSM 816 / NCTC 3887 / NRRL 1 / QM 1276 / 107).